The chain runs to 743 residues: Adhesion defective protein 2 (743 aa).

The segment at 1-36 is disordered; that stretch reads MADPGLRSGVGLPSQQGQKHDLQKDQKQPHVNNADR. The span at 18 to 28 shows a compositional bias: basic and acidic residues; that stretch reads QKHDLQKDQKQ. The region spanning 38–70 is the LisH domain; the sequence is TQSLLNSYIYDYLIKKDYCEAARAFGREAQVQT. Disordered stretches follow at residues 79-127, 264-361, 379-426, and 476-692; these read NSLA…PPPP, LQSV…QYPV, RNPH…YGFS, and KERK…KSSD. Serine 89 bears the Phosphoserine mark. A compositionally biased stretch (polar residues) spans 98 to 114; the sequence is ISNNESSDENMNVNNGN. Residues 264–281 show a composition bias toward low complexity; that stretch reads LQSVQQQQKQHQQKKTPQ. Polar residues-rich tracts occupy residues 282-297, 315-353, 390-399, 408-426, and 482-500; these read SGST…QPTT, IPSS…DTTG, PSSTLPQQQK, QQPS…YGFS, and TSAS…SSVA. Residues 501-520 are compositionally biased toward low complexity; it reads KTKSTTPKSTDTPTEATTSP. Composition is skewed to polar residues over residues 521–544 and 556–566; these read VKVS…NMPM and DHPSNYSNLIE. Residues 567-578 show a composition bias toward low complexity; that stretch reads NSSTSDTNNADN. The segment covering 586-602 has biased composition (polar residues); it reads WQLQQTHSSRPTPNASS. A compositionally biased stretch (low complexity) spans 612–631; that stretch reads PSSANSNAPTPAPTVNTTNP. Positions 661 to 670 are enriched in polar residues; it reads DNQNQSGKSN. A compositionally biased stretch (low complexity) spans 671–688; sequence PDTSATPSAPTESTTVAT.

Belongs to the FLO8 family.

It is found in the cytoplasm. It localises to the nucleus. Its function is as follows. Probable transcriptional regulator involved in cell adhesion. This chain is Adhesion defective protein 2 (adn2), found in Schizosaccharomyces pombe (strain 972 / ATCC 24843) (Fission yeast).